Reading from the N-terminus, the 201-residue chain is Probable GTP-binding protein EngB (201 aa).

Residues 21–191 enclose the EngB-type G domain; it reads PEAQIALAGR…WQELARAAGV (171 aa). GTP-binding positions include 29-36, 56-60, 75-78, 142-145, and 168-172; these read GRSNVGKS, GKTRS, DLPG, TKAD, and VLTSS. Mg(2+) contacts are provided by S36 and T58.

Belongs to the TRAFAC class TrmE-Era-EngA-EngB-Septin-like GTPase superfamily. EngB GTPase family. Mg(2+) is required as a cofactor.

Functionally, necessary for normal cell division and for the maintenance of normal septation. This chain is Probable GTP-binding protein EngB, found in Desulfovibrio desulfuricans (strain ATCC 27774 / DSM 6949 / MB).